Here is a 736-residue protein sequence, read N- to C-terminus: MSSKPTPITPELVASHGLKPDEYQRILKLIGREPSLTELGIFSAMWNEHCSYKSSRLHLKGLPTKAPWVLQGPGENAGVIDIGDNEAIVFKMESHNHPSFIEPYQGAATGVGGILRDVFTMGARPIACLNALSFGAPEHPKTRHLVSGVVAGVGGYGNSFGVPTVGGQVRFDTRYDGNILVNAMAVGLADADKIFLAAASGVGMPIVYLGSKTGRDGIHGASMASAVFDDDSAEKRPTVQVGDPFAEKLLLEACLEIMAADCVIAIQDMGAAGLTSSAVEMGAKGNLGVDLDLDKVPTREPGMTAYEMMLSESQERMLMVLKPEKEREAEAIFKKWGLDFAIVGHTTPTLRFVVKHGGEVKADLPIKELGDEAPLYDRPHVETPKLPIIHARDIKPPIGVVEALEKLIGSPELCSRRWVWEQYDHVIGGNTVQRPGGDAAVVRIKDGPKGLALTVDVTPRYCEADPYEGGKQAVAEAYRNITAVGGKPLAITDNLNFGNPERPEIMGQLVGCLKGIAEACVALEAPIVSGNVSLYNETNGRGILPTPSIGGVGLLDDFTKSATLAFKAAGEAILLIGETRGWLGQSVYLRDICGREEGAPPPVNLDAEKRNGTVVRGMIHSGTATAVHDLSDGGLLIALAEMAIAGHIGAALDAGPEAIVPHAWWFGEDQARYLVTVPADELLGVLTKLKAVGVPCLQIGKTAGHTLSIAGERAIDIKALEHAHEAWLPNYMGGKA.

His49 is a catalytic residue. ATP-binding residues include Tyr52 and Lys91. Residue Glu93 participates in Mg(2+) binding. Substrate is bound by residues Ser94–His97 and Arg116. The active-site Proton acceptor is the His95. Asp117 provides a ligand contact to Mg(2+). Gln240 serves as a coordination point for substrate. A Mg(2+)-binding site is contributed by Asp268. Position 312–314 (Glu312–Gln314) interacts with substrate. ATP is bound by residues Asp493 and Gly530. Asn531 is a binding site for Mg(2+). Ser533 lines the substrate pocket.

It belongs to the FGAMS family. In terms of assembly, monomer. Part of the FGAM synthase complex composed of 1 PurL, 1 PurQ and 2 PurS subunits.

The protein localises to the cytoplasm. It carries out the reaction N(2)-formyl-N(1)-(5-phospho-beta-D-ribosyl)glycinamide + L-glutamine + ATP + H2O = 2-formamido-N(1)-(5-O-phospho-beta-D-ribosyl)acetamidine + L-glutamate + ADP + phosphate + H(+). It functions in the pathway purine metabolism; IMP biosynthesis via de novo pathway; 5-amino-1-(5-phospho-D-ribosyl)imidazole from N(2)-formyl-N(1)-(5-phospho-D-ribosyl)glycinamide: step 1/2. Part of the phosphoribosylformylglycinamidine synthase complex involved in the purines biosynthetic pathway. Catalyzes the ATP-dependent conversion of formylglycinamide ribonucleotide (FGAR) and glutamine to yield formylglycinamidine ribonucleotide (FGAM) and glutamate. The FGAM synthase complex is composed of three subunits. PurQ produces an ammonia molecule by converting glutamine to glutamate. PurL transfers the ammonia molecule to FGAR to form FGAM in an ATP-dependent manner. PurS interacts with PurQ and PurL and is thought to assist in the transfer of the ammonia molecule from PurQ to PurL. This is Phosphoribosylformylglycinamidine synthase subunit PurL from Rhodopseudomonas palustris (strain BisB18).